The sequence spans 276 residues: Homeobox-leucine zipper protein HOX11 (276 aa).

The tract at residues Met-1–Leu-92 is disordered. Polar residues predominate over residues Leu-39–Gly-48. Positions His-58–Asp-73 are enriched in gly residues. Positions Ser-87–Gln-146 form a DNA-binding region, homeobox. The segment at Lys-145 to Pro-189 is leucine-zipper. The disordered stretch occupies residues Ala-214 to Ala-244.

This sequence belongs to the HD-ZIP homeobox family. Class II subfamily. Expressed in stems, leaf sheaths and blades and panicles.

Its subcellular location is the nucleus. In terms of biological role, probable transcription factor. The sequence is that of Homeobox-leucine zipper protein HOX11 (HOX11) from Oryza sativa subsp. indica (Rice).